The primary structure comprises 527 residues: Catalase (527 aa).

Positions 1-22 (MADSRDPASDQMKHWKEERAAQ) are enriched in basic and acidic residues. The disordered stretch occupies residues 1 to 32 (MADSRDPASDQMKHWKEERAAQKPDVLTTAGG). A2 carries the N-acetylalanine modification. S9 carries the post-translational modification Phosphoserine. K13 carries the post-translational modification N6-succinyllysine. Catalysis depends on residues H75 and N148. 4 residues coordinate NADP(+): H194, S201, R203, and N213. At K221 the chain carries N6-succinyllysine. K233 carries the post-translational modification N6-acetyllysine. Residues K237, W303, H305, and K306 each contribute to the NADP(+) site. An N6-acetyllysine; alternate modification is found at K306. K306 bears the N6-succinyllysine; alternate mark. Y358 is a binding site for heme. S434 is modified (phosphoserine). At K480 the chain carries N6-acetyllysine; alternate. Residue K480 is modified to N6-succinyllysine; alternate. K499 bears the N6-acetyllysine mark. Position 511 is a phosphothreonine (T511). S517 is subject to Phosphoserine. K522 bears the N6-succinyllysine mark. Positions 524–527 (KANL) match the Microbody targeting signal; atypical motif.

The protein belongs to the catalase family. In terms of assembly, homotetramer. Interacts (via microbody targeting signal) with PEX5, monomeric form interacts with PEX5, leading to its translocation into peroxisomes. Heme serves as cofactor. The cofactor is NADP(+).

The protein resides in the peroxisome matrix. It carries out the reaction 2 H2O2 = O2 + 2 H2O. Catalyzes the degradation of hydrogen peroxide (H(2)O(2)) generated by peroxisomal oxidases to water and oxygen, thereby protecting cells from the toxic effects of hydrogen peroxide. Promotes growth of cells including T-cells, B-cells, myeloid leukemia cells, melanoma cells, mastocytoma cells and normal and transformed fibroblast cells. The chain is Catalase (CAT) from Cavia porcellus (Guinea pig).